Here is a 329-residue protein sequence, read N- to C-terminus: Aspartate carbamoyltransferase catalytic subunit (329 aa).

Residues Arg63 and Thr64 each coordinate carbamoyl phosphate. Position 91 (Lys91) interacts with L-aspartate. Arg113, His141, and Gln144 together coordinate carbamoyl phosphate. L-aspartate is bound by residues Arg179 and Arg234. Carbamoyl phosphate contacts are provided by Gly275 and Pro276.

It belongs to the aspartate/ornithine carbamoyltransferase superfamily. ATCase family. In terms of assembly, heterododecamer (2C3:3R2) of six catalytic PyrB chains organized as two trimers (C3), and six regulatory PyrI chains organized as three dimers (R2).

It carries out the reaction carbamoyl phosphate + L-aspartate = N-carbamoyl-L-aspartate + phosphate + H(+). It participates in pyrimidine metabolism; UMP biosynthesis via de novo pathway; (S)-dihydroorotate from bicarbonate: step 2/3. Catalyzes the condensation of carbamoyl phosphate and aspartate to form carbamoyl aspartate and inorganic phosphate, the committed step in the de novo pyrimidine nucleotide biosynthesis pathway. The polypeptide is Aspartate carbamoyltransferase catalytic subunit (Magnetococcus marinus (strain ATCC BAA-1437 / JCM 17883 / MC-1)).